The primary structure comprises 342 residues: Succinylglutamate desuccinylase (342 aa).

3 residues coordinate Zn(2+): H63, E66, and H155. The active site involves E219.

The protein belongs to the AspA/AstE family. Succinylglutamate desuccinylase subfamily. Requires Zn(2+) as cofactor.

The catalysed reaction is N-succinyl-L-glutamate + H2O = L-glutamate + succinate. Its pathway is amino-acid degradation; L-arginine degradation via AST pathway; L-glutamate and succinate from L-arginine: step 5/5. Functionally, transforms N(2)-succinylglutamate into succinate and glutamate. The chain is Succinylglutamate desuccinylase from Vibrio cholerae serotype O1 (strain ATCC 39315 / El Tor Inaba N16961).